We begin with the raw amino-acid sequence, 318 residues long: Polyprenal reductase (318 aa).

The Cytoplasmic portion of the chain corresponds to 1–19; that stretch reads MAPWAAAQLWALNPLRALW. Residues 20 to 40 form a helical membrane-spanning segment; that stretch reads LTLAAAFLLTLLLQLVPPGLL. The Lumenal segment spans residues 41–80; that stretch reads PGCALFQDLIRYGKTKREGQSRPAVCRVFDVPKRYFSHFY. Residues 81–101 form a helical membrane-spanning segment; it reads IISALWNGFLLWHLTQSVFLG. Residues 102–119 are Cytoplasmic-facing; sequence VPFPNWLHGLLRILGASQ. A helical transmembrane segment spans residues 120 to 140; sequence FQGGELALSAFLVLVFLWLHS. Residues 141 to 156 are Lumenal-facing; that stretch reads LRRLFECFYVSVFSNT. A helical transmembrane segment spans residues 157-177; that stretch reads VIHIVQYCFGLVYYVLTGLTV. The Cytoplasmic portion of the chain corresponds to 178–194; sequence LSQVPMDGRNAYVIGKN. A helical membrane pass occupies residues 195–215; that stretch reads LLMQARWFHILGMLMFIWSSV. The Lumenal segment spans residues 216 to 265; it reads HQYKCHVILGNLRKNKAGVVIHCNHRIPFGDWFEYVSSPNYLAELMIYIS. The helical transmembrane segment at 266–286 threads the bilayer; the sequence is MAVTFGFHNLTWWLVVTYVFF. At 287-318 the chain is on the cytoplasmic side; that stretch reads SQALSAFLSHKFYKSKFVSYPKHRKAFLPFLF.

This sequence belongs to the steroid 5-alpha reductase family. Polyprenal reductase subfamily.

The protein localises to the endoplasmic reticulum membrane. It carries out the reaction a di-trans,poly-cis-dolichal + NADP(+) = a di-trans,poly-cis-polyprenal + NADPH + H(+). The enzyme catalyses a 3-oxo-5alpha-steroid + NADP(+) = a 3-oxo-Delta(4)-steroid + NADPH + H(+). It catalyses the reaction androst-4-ene-3,17-dione + NADPH + H(+) = 5alpha-androstan-3,17-dione + NADP(+). The catalysed reaction is 17beta-hydroxy-5alpha-androstan-3-one + NADP(+) = testosterone + NADPH + H(+). It participates in protein modification; protein glycosylation. Functionally, plays a key role in early steps of protein N-linked glycosylation by being involved in the conversion of polyprenol into dolichol. Acts as a polyprenal reductase that mediates the reduction of polyprenal into dolichal in a NADP-dependent mechanism. Dolichols are required for the synthesis of dolichol-linked monosaccharides and the oligosaccharide precursor used for N-glycosylation. Also able to convert testosterone (T) into 5-alpha-dihydrotestosterone (DHT). This is Polyprenal reductase (SRD5A3) from Ailuropoda melanoleuca (Giant panda).